The following is a 135-amino-acid chain: Large ribosomal subunit protein uL16c (135 aa).

This sequence belongs to the universal ribosomal protein uL16 family. Part of the 50S ribosomal subunit.

It is found in the plastid. Its subcellular location is the chloroplast. This chain is Large ribosomal subunit protein uL16c, found in Olimarabidopsis pumila (Dwarf rocket).